The following is a 214-amino-acid chain: MELYLDTANIDEIKEIASYGLVDGVTTNPSIIAKSGRNFREVIKEICSIVSGPVSAEVLSTKFDGMMKEALELVEIAENVVIKVPLIPEGLKTVVELTKRNIPTNVTLCFSSSQALLAAKAGATYISPFIGRVDDTSWDGMELISEIREIYDNYGYDTRILAASIRGPMHLKESALRGADCATMPHSAFLQLFKHPLTDIGLEKFLEDSKKLKW.

K83 functions as the Schiff-base intermediate with substrate in the catalytic mechanism.

It belongs to the transaldolase family. Type 3B subfamily.

It is found in the cytoplasm. The catalysed reaction is D-sedoheptulose 7-phosphate + D-glyceraldehyde 3-phosphate = D-erythrose 4-phosphate + beta-D-fructose 6-phosphate. Its pathway is carbohydrate degradation; pentose phosphate pathway; D-glyceraldehyde 3-phosphate and beta-D-fructose 6-phosphate from D-ribose 5-phosphate and D-xylulose 5-phosphate (non-oxidative stage): step 2/3. Transaldolase is important for the balance of metabolites in the pentose-phosphate pathway. The protein is Probable transaldolase of Leptospira borgpetersenii serovar Hardjo-bovis (strain JB197).